Reading from the N-terminus, the 172-residue chain is uncharacterized protein (172 aa).

4 helical membrane passes run 46–66 (MFSI…FLYP), 76–96 (LLSL…VGLF), 104–124 (WKFL…LGWS), and 129–149 (FFYA…FTEI).

Its subcellular location is the endoplasmic reticulum membrane. This is an uncharacterized protein from Schizosaccharomyces pombe (strain 972 / ATCC 24843) (Fission yeast).